The sequence spans 478 residues: Chromosomal replication initiator protein DnaA (478 aa).

Residues 1–82 form a domain I, interacts with DnaA modulators region; sequence MHTMNKTAES…ELGKNAKLLY (82 aa). The interval 82–140 is domain II; it reads YKIKMENTYGNKLPFTEQLPSAHRSPVRTQEIDVPVQQKNPELRNPFIIPGIRNLKIES. The segment at 141 to 358 is domain III, AAA+ region; the sequence is QLNANYSFDN…GAIISLIAQS (218 aa). ATP contacts are provided by G186, G188, K189, and T190. The interval 359–478 is domain IV, binds dsDNA; that stretch reads SFNKKEVTLE…VDDINKKLSL (120 aa).

The protein belongs to the DnaA family. As to quaternary structure, oligomerizes as a right-handed, spiral filament on DNA at oriC.

It localises to the cytoplasm. Its function is as follows. Plays an essential role in the initiation and regulation of chromosomal replication. ATP-DnaA binds to the origin of replication (oriC) to initiate formation of the DNA replication initiation complex once per cell cycle. Binds the DnaA box (a 9 base pair repeat at the origin) and separates the double-stranded (ds)DNA. Forms a right-handed helical filament on oriC DNA; dsDNA binds to the exterior of the filament while single-stranded (ss)DNA is stabiized in the filament's interior. The ATP-DnaA-oriC complex binds and stabilizes one strand of the AT-rich DNA unwinding element (DUE), permitting loading of DNA polymerase. After initiation quickly degrades to an ADP-DnaA complex that is not apt for DNA replication. Binds acidic phospholipids. This chain is Chromosomal replication initiator protein DnaA, found in Flavobacterium psychrophilum (strain ATCC 49511 / DSM 21280 / CIP 103535 / JIP02/86).